The following is a 271-amino-acid chain: N-acetyltransferase ECO1 (271 aa).

The interval Met1–Ser38 is disordered. Over residues Ser20 to Pro31 the composition is skewed to low complexity. The segment at Thr80–His104 adopts a CCHH-type zinc-finger fold.

Belongs to the acetyltransferase family. ECO subfamily.

It is found in the nucleus. Probable acetyltransferase required for the establishment of sister chromatid cohesion and couple the processes of cohesion and DNA replication to ensure that only sister chromatids become paired together. In contrast to the structural cohesins, the deposition and establishment factors are required only during S phase. Acts by acetylating the cohesin complex component SMC3. The polypeptide is N-acetyltransferase ECO1 (ECO1) (Yarrowia lipolytica (strain CLIB 122 / E 150) (Yeast)).